Reading from the N-terminus, the 622-residue chain is 1-deoxy-D-xylulose-5-phosphate synthase (622 aa).

Thiamine diphosphate contacts are provided by residues His-74 and 115–117 (GHS). Asp-146 is a binding site for Mg(2+). Residues 147–148 (GA), Asn-175, Tyr-286, and Glu-366 each bind thiamine diphosphate. A Mg(2+)-binding site is contributed by Asn-175.

It belongs to the transketolase family. DXPS subfamily. Homodimer. Mg(2+) serves as cofactor. Thiamine diphosphate is required as a cofactor.

The catalysed reaction is D-glyceraldehyde 3-phosphate + pyruvate + H(+) = 1-deoxy-D-xylulose 5-phosphate + CO2. The protein operates within metabolic intermediate biosynthesis; 1-deoxy-D-xylulose 5-phosphate biosynthesis; 1-deoxy-D-xylulose 5-phosphate from D-glyceraldehyde 3-phosphate and pyruvate: step 1/1. Its function is as follows. Catalyzes the acyloin condensation reaction between C atoms 2 and 3 of pyruvate and glyceraldehyde 3-phosphate to yield 1-deoxy-D-xylulose-5-phosphate (DXP). The polypeptide is 1-deoxy-D-xylulose-5-phosphate synthase (Carboxydothermus hydrogenoformans (strain ATCC BAA-161 / DSM 6008 / Z-2901)).